Consider the following 424-residue polypeptide: Protein CLP1 homolog (424 aa).

Residues glutamate 19, lysine 60, and 122–127 (DVGKST) each bind ATP.

It belongs to the Clp1 family. Clp1 subfamily.

The protein resides in the nucleus. In terms of biological role, required for endonucleolytic cleavage during polyadenylation-dependent pre-mRNA 3'-end formation. In Aedes aegypti (Yellowfever mosquito), this protein is Protein CLP1 homolog (cbc).